Reading from the N-terminus, the 157-residue chain is Endoribonuclease YbeY (157 aa).

Zn(2+)-binding residues include H111, H115, and H121.

Belongs to the endoribonuclease YbeY family. It depends on Zn(2+) as a cofactor.

The protein resides in the cytoplasm. Single strand-specific metallo-endoribonuclease involved in late-stage 70S ribosome quality control and in maturation of the 3' terminus of the 16S rRNA. The polypeptide is Endoribonuclease YbeY (Pseudomonas putida (strain W619)).